Reading from the N-terminus, the 1226-residue chain is DNA-directed RNA polymerase subunit beta (1226 aa).

It belongs to the RNA polymerase beta chain family. The RNAP catalytic core consists of 2 alpha, 1 beta, 1 beta' and 1 omega subunit. When a sigma factor is associated with the core the holoenzyme is formed, which can initiate transcription.

It catalyses the reaction RNA(n) + a ribonucleoside 5'-triphosphate = RNA(n+1) + diphosphate. Its function is as follows. DNA-dependent RNA polymerase catalyzes the transcription of DNA into RNA using the four ribonucleoside triphosphates as substrates. The polypeptide is DNA-directed RNA polymerase subunit beta (Leptospira interrogans serogroup Icterohaemorrhagiae serovar copenhageni (strain Fiocruz L1-130)).